The primary structure comprises 477 residues: MGRKEEEDCSSWKKQTTNIRKTFIFMEVLGSGAFSEVFLVKQRVTGKLFALKCIKKSPAFRDSSLENEIAVLKRIKHENIVTLEDIYESTTHYYLVMQLVSGGELFDRILERGVYTEKDASLVIQQVLSAVKYLHENGIVHRDLKPENLLYLTPEENSKIMITDFGLSKMEQNGVMSTACGTPGYVAPEVLAQKPYSKAVDCWSIGVITYILLCGYPPFYEETESKLFEKIKEGYYEFESPFWDDISESAKDFICHLLEKDPNERYTCEKALRHPWIDGNTALHRDIYPSVSLQIQKNFAKSKWRQAFNAAAVVHHMRKLHMNLHSPSVRQEVENRPPVSPAPEVSRPDSHDSSITEAPILDPSTPLPALTRLPCSHSSRPSAPSGGRSLNCLVNGSLRISSSLVPMQQGPLATGPCGCCSSCLNIGNKGKSSYCSEPTLFRKANKKQNFKSEVMVPVKAGGSTHCRGGQTGVCLVM.

The 255-residue stretch at 23 to 277 folds into the Protein kinase domain; sequence FIFMEVLGSG…CEKALRHPWI (255 aa). Residues 29–37 and K52 each bind ATP; that span reads LGSGAFSEV. The active-site Proton acceptor is the D143. The tract at residues 277–317 is autoinhibitory domain; sequence IDGNTALHRDIYPSVSLQIQKNFAKSKWRQAFNAAAVVHHM. The segment at 297 to 318 is calmodulin-binding; sequence KNFAKSKWRQAFNAAAVVHHMR. A disordered region spans residues 326 to 388; sequence SPSVRQEVEN…SRPSAPSGGR (63 aa). The segment covering 376–388 has biased composition (low complexity); sequence SHSSRPSAPSGGR.

This sequence belongs to the protein kinase superfamily. CAMK Ser/Thr protein kinase family. CaMK subfamily. May be prenylated on Cys-474. In terms of tissue distribution, highly expressed in brain, in neuronal cell bodies of the central nucleus of amygdala and ventromedial hypothalamic nucleus. Also detected in heart, testis, and kidney.

The protein resides in the cytoplasm. It is found in the golgi apparatus membrane. It localises to the cell membrane. It carries out the reaction L-seryl-[protein] + ATP = O-phospho-L-seryl-[protein] + ADP + H(+). The enzyme catalyses L-threonyl-[protein] + ATP = O-phospho-L-threonyl-[protein] + ADP + H(+). Activated by Ca(2+)/calmodulin. Binding of calmodulin is thought to result in a conformational change and leads to activation through phosphorylation by CAMKK1. Its function is as follows. Calcium/calmodulin-dependent protein kinase belonging to a proposed calcium-triggered signaling cascade. In vitro phosphorylates transcription factor CREB1. The chain is Calcium/calmodulin-dependent protein kinase type 1G (Camk1g) from Mus musculus (Mouse).